Here is a 388-residue protein sequence, read N- to C-terminus: MGILGLSKLIADLAPLAIRESEIKNFFGRKVAIDASMCLYQFLIAVRSEGAQLAAVNGDPTSHLMGMFYRTIRLLDNGIKPVYVFDGAPPDMKSGELAKRAERRDEAEKALKAATEAGDEAQIEKFNRRLVRVTKEHSREAKELLKLMGVPYVDAPCEAEAQCAALVKAGKVYATATEDMDALTFGSCKLLRYLTYSEARKMPVKEFSYDKVLQGLELTSKEFIDLCILMGCDYCESIRGVGPKRAIELIKSYRDIETILENIDTNKYAVPENWNYKRARELFIEPDVTDASTIDLKWTDPDEDGLVQFLCGDRQFNEERVRNGAKKLLKSKQAQTQVRLDSFFKTLPSSPNAIAAAKRKAEESKKSANSKKAKIGGGSGAGRGRRPK.

An N-domain region spans residues 1–104 (MGILGLSKLI…GELAKRAERR (104 aa)). Aspartate 34 contributes to the Mg(2+) binding site. 2 residues coordinate DNA: arginine 47 and arginine 70. Positions 86, 158, 160, 179, and 181 each coordinate Mg(2+). Residues 122 to 253 (QIEKFNRRLV…KRAIELIKSY (132 aa)) form an I-domain region. Position 158 (glutamate 158) interacts with DNA. Positions 231 and 233 each coordinate DNA. Aspartate 233 is a binding site for Mg(2+). Residues 336–344 (TQVRLDSFF) form an interaction with PCNA region. The disordered stretch occupies residues 355–388 (AAAKRKAEESKKSANSKKAKIGGGSGAGRGRRPK).

It belongs to the XPG/RAD2 endonuclease family. FEN1 subfamily. As to quaternary structure, interacts with PCNA. Three molecules of FEN1 bind to one PCNA trimer with each molecule binding to one PCNA monomer. PCNA stimulates the nuclease activity without altering cleavage specificity. The cofactor is Mg(2+). Post-translationally, phosphorylated. Phosphorylation upon DNA damage induces relocalization to the nuclear plasma.

It is found in the nucleus. The protein localises to the nucleolus. The protein resides in the nucleoplasm. Its subcellular location is the mitochondrion. Functionally, structure-specific nuclease with 5'-flap endonuclease and 5'-3' exonuclease activities involved in DNA replication and repair. During DNA replication, cleaves the 5'-overhanging flap structure that is generated by displacement synthesis when DNA polymerase encounters the 5'-end of a downstream Okazaki fragment. It enters the flap from the 5'-end and then tracks to cleave the flap base, leaving a nick for ligation. Also involved in the long patch base excision repair (LP-BER) pathway, by cleaving within the apurinic/apyrimidinic (AP) site-terminated flap. Acts as a genome stabilization factor that prevents flaps from equilibrating into structures that lead to duplications and deletions. Also possesses 5'-3' exonuclease activity on nicked or gapped double-stranded DNA, and exhibits RNase H activity. Also involved in replication and repair of rDNA and in repairing mitochondrial DNA. The protein is Flap endonuclease 1 of Drosophila grimshawi (Hawaiian fruit fly).